A 181-amino-acid polypeptide reads, in one-letter code: Protein Syd (181 aa).

Belongs to the Syd family.

Its subcellular location is the cell inner membrane. Its function is as follows. Interacts with the SecY protein in vivo. May bind preferentially to an uncomplexed state of SecY, thus functioning either as a chelating agent for excess SecY in the cell or as a regulatory factor that negatively controls the translocase function. The protein is Protein Syd of Escherichia coli (strain K12 / DH10B).